The primary structure comprises 313 residues: Methionyl-tRNA formyltransferase (313 aa).

109-112 (SLLP) provides a ligand contact to (6S)-5,6,7,8-tetrahydrofolate.

It belongs to the Fmt family.

The catalysed reaction is L-methionyl-tRNA(fMet) + (6R)-10-formyltetrahydrofolate = N-formyl-L-methionyl-tRNA(fMet) + (6S)-5,6,7,8-tetrahydrofolate + H(+). Its function is as follows. Attaches a formyl group to the free amino group of methionyl-tRNA(fMet). The formyl group appears to play a dual role in the initiator identity of N-formylmethionyl-tRNA by promoting its recognition by IF2 and preventing the misappropriation of this tRNA by the elongation apparatus. This Thermotoga maritima (strain ATCC 43589 / DSM 3109 / JCM 10099 / NBRC 100826 / MSB8) protein is Methionyl-tRNA formyltransferase.